The sequence spans 427 residues: Polyprenol-phosphate-mannose-dependent alpha-(1-2)-phosphatidylinositol mannoside mannosyltransferase (427 aa).

Helical transmembrane passes span 18–38, 101–121, 143–163, 191–211, 218–238, 279–299, 308–328, 331–346, 351–371, and 386–406; these read LWCLLWLLAGVALGYVAWRLF, ASVAITVLTLVLLIASTAIVL, WLAVLIVAPATIWLEPISSNF, LMLGLGIALKLTPAVFLLYFL, AALTALASFAVATLLGFVLAW, ERFALWVAGSLLVLAATIWAM, PTLAVICVALFGLVVSPVSWS, WVWMLPAVLVIGLLGW, VALAMLSLAGVVLMRWTPIDL, and LAGMSYVWWALAVIVVAGLTV.

The protein belongs to the glycosyltransferase 87 family.

It is found in the cell membrane. It functions in the pathway phospholipid metabolism; phosphatidylinositol metabolism. Functionally, responsible for the addition of alpha-(1-2) mannose branches to the linear mannan core on the biosynthetic pathway to mature lipoarabinomannan (LAM). In Mycobacterium tuberculosis (strain ATCC 25618 / H37Rv), this protein is Polyprenol-phosphate-mannose-dependent alpha-(1-2)-phosphatidylinositol mannoside mannosyltransferase.